The primary structure comprises 166 residues: Lutropin subunit beta (166 aa).

A signal peptide spans 1–21 (MGGAQVLLLLTLLGTPLVTHG). 6 disulfide bridges follow: Cys56–Cys104, Cys70–Cys119, Cys73–Cys157, Cys81–Cys135, Cys85–Cys137, and Cys140–Cys147. Asn60 carries N-linked (GlcNAc...) asparagine glycosylation.

It belongs to the glycoprotein hormones subunit beta family. In terms of assembly, heterodimer of a common alpha chain and a unique beta chain which confers biological specificity to thyrotropin, lutropin, follitropin and gonadotropin.

It localises to the secreted. Promotes spermatogenesis and ovulation by stimulating the testes and ovaries to synthesize steroids. In Coturnix japonica (Japanese quail), this protein is Lutropin subunit beta (LHB).